The following is a 1220-amino-acid chain: Plasma membrane calcium-transporting ATPase 1 (1220 aa).

Glycine 2 carries the post-translational modification N-acetylglycine. The Cytoplasmic segment spans residues 2–105; the sequence is GDMANNSVAY…KTFLQLVWEA (104 aa). Serine 8 and serine 17 each carry phosphoserine. Residues 106–126 traverse the membrane as a helical segment; that stretch reads LQDVTLIILEIAAIVSLGLSF. Residues 127–154 are Extracellular-facing; sequence YQPPEGDNALCGEVSVGEEEGEGETGWI. The chain crosses the membrane as a helical span at residues 155–175; that stretch reads EGAAILLSVVCVVLVTAFNDW. The Cytoplasmic segment spans residues 176 to 366; sequence SKEKQFRGLQ…KEKSVLQGKL (191 aa). The disordered stretch occupies residues 297–356; that stretch reads EEEKKDEKKKEKKNKKQDGAIENRNKAKAQDGAAMEMQPLKSEEGGDGDEKDKKKANLPK. 2 stretches are compositionally biased toward basic and acidic residues: residues 312–325 and 337–356; these read KQDG…KAKA and KSEE…NLPK. Serine 338 carries the phosphoserine modification. Residues 367–386 form a helical membrane-spanning segment; the sequence is TKLAVQIGKAGLLMSAITVI. The Extracellular portion of the chain corresponds to 387–418; sequence ILVLYFVIDTFWVQKRPWLAECTPIYIQYFVK. Residues 419-439 form a helical membrane-spanning segment; the sequence is FFIIGVTVLVVAVPEGLPLAV. The Cytoplasmic portion of the chain corresponds to 440–855; it reads TISLAYSVKK…RNVYDSISKF (416 aa). The 4-aspartylphosphate intermediate role is filled by aspartate 475. Mg(2+) is bound by residues aspartate 475, threonine 477, and aspartate 797. Residues 856-876 traverse the membrane as a helical segment; sequence LQFQLTVNVVAVIVAFTGACI. Residues 877–882 lie on the Extracellular side of the membrane; sequence TQDSPL. Residues 883–903 form a helical membrane-spanning segment; sequence KAVQMLWVNLIMDTLASLALA. Over 904-927 the chain is Cytoplasmic; sequence TEPPTESLLLRKPYGRNKPLISRT. Residues 928 to 948 form a helical membrane-spanning segment; it reads MMKNILGHAFYQLVVVFTLLF. The Extracellular portion of the chain corresponds to 949–971; sequence AGEKFFDIDSGRNAPLHAPPSEH. Residues 972–991 traverse the membrane as a helical segment; it reads YTIVFNTFVLMQLFNEINAR. Residues 992 to 1005 are Cytoplasmic-facing; the sequence is KIHGERNVFEGIFN. Residues 1006–1027 traverse the membrane as a helical segment; it reads NAIFCTIVLGTFVVQIIIVQFG. Residues 1028–1039 lie on the Extracellular side of the membrane; it reads GKPFSCSELSIE. A helical transmembrane segment spans residues 1040–1060; that stretch reads QWLWSIFLGMGTLLWGQLIST. The Cytoplasmic portion of the chain corresponds to 1061 to 1220; the sequence is IPTSRLKFLK…SPLHSLETSL (160 aa). The interval 1100–1117 is calmodulin-binding subdomain A; sequence LRRGQILWFRGLNRIQTQ. Threonine 1116 is subject to Phosphothreonine; by PKC. Positions 1118–1220 are required for basolateral membrane targeting; it reads IRVVNAFRSS…SPLHSLETSL (103 aa). 2 positions are modified to phosphoserine: serine 1140 and serine 1155. Residues 1160-1220 form a disordered region; it reads PLIDDTDAED…SPLHSLETSL (61 aa). Threonine 1165 is subject to Phosphothreonine. 2 positions are modified to phosphoserine: serine 1178 and serine 1182. The span at 1200 to 1220 shows a compositional bias: polar residues; that stretch reads MNKSATSSSPGSPLHSLETSL.

This sequence belongs to the cation transport ATPase (P-type) (TC 3.A.3) family. Type IIB subfamily. In terms of assembly, monomer. Dimer. Oligomer. Calmodulin binding. Interacts with PDZD11. Interacts with SLC35G1 and STIM1. Interacts with YWHAE; interacts with the monomeric and dimeric forms of the YWHAE but prefer the monomer form; this interaction inhibits calcium-transporting ATPase activity. Interacts with NPTN; this interaction stabilizes ATP2B1 and increases ATPase activity; this interaction controls T cell calcium homeostasis following T cell activation. Interacts with EPB41; regulates small intestinal calcium absorption through regulation of membrane expression of ATP2B1. In terms of tissue distribution, expressed in the retina, with strongest expression in the outer plexiform layer and lower expression levels in the inner nuclear layer and the inner plexiform layer. Specifically expressed in the following retinal cell types: photoreceptor cells, cone bipolar cells and horizontal cells. Expressed in osteoclasts (at protein level). Expressed at highest levels in brain, intestine, kidney, and stomach, and at lower levels in liver, lung, aorta, portal vein, urinary bladder, diaphragm, seminal vesicles and testes. Expressed in small intestinal epithelium.

It is found in the cell membrane. It localises to the basolateral cell membrane. The protein resides in the synapse. The protein localises to the presynaptic cell membrane. Its subcellular location is the cytoplasmic vesicle. It is found in the secretory vesicle. It localises to the synaptic vesicle membrane. It carries out the reaction Ca(2+)(in) + ATP + H2O = Ca(2+)(out) + ADP + phosphate + H(+). Functionally, catalyzes the hydrolysis of ATP coupled with the transport of calcium from the cytoplasm to the extracellular space thereby maintaining intracellular calcium homeostasis. Plays a role in blood pressure regulation through regulation of intracellular calcium concentration and nitric oxide production leading to regulation of vascular smooth muscle cells vasoconstriction. Positively regulates bone mineralization through absorption of calcium from the intestine. Plays dual roles in osteoclast differentiation and survival by regulating RANKL-induced calcium oscillations in preosteoclasts and mediating calcium extrusion in mature osteoclasts. Regulates insulin sensitivity through calcium/calmodulin signaling pathway by regulating AKT1 activation and NOS3 activation in endothelial cells. May play a role in synaptic transmission by modulating calcium and proton dynamics at the synaptic vesicles. This is Plasma membrane calcium-transporting ATPase 1 from Mus musculus (Mouse).